We begin with the raw amino-acid sequence, 164 residues long: Transcription factor E (164 aa).

In terms of domain architecture, HTH TFE/IIEalpha-type spans 5-87 (NDKVIRGYLL…LWRLDFSDIE (83 aa)).

Belongs to the TFE family. As to quaternary structure, monomer. Interaction with RNA polymerase subunits RpoF and RpoE is necessary for Tfe stimulatory transcription activity. Able to interact with Tbp and RNA polymerase in the absence of DNA promoter. Interacts both with the preinitiation and elongation complexes.

Transcription factor that plays a role in the activation of archaeal genes transcribed by RNA polymerase. Facilitates transcription initiation by enhancing TATA-box recognition by TATA-box-binding protein (Tbp), and transcription factor B (Tfb) and RNA polymerase recruitment. Not absolutely required for transcription in vitro, but particularly important in cases where Tbp or Tfb function is not optimal. It dynamically alters the nucleic acid-binding properties of RNA polymerases by stabilizing the initiation complex and destabilizing elongation complexes. Seems to translocate with the RNA polymerase following initiation and acts by binding to the non template strand of the transcription bubble in elongation complexes. This is Transcription factor E from Methanosarcina barkeri (strain Fusaro / DSM 804).